The chain runs to 372 residues: Putative aminopeptidase SgcX (372 aa).

A divalent metal cation is bound by residues His-67 and Asp-180. Glu-212 acts as the Proton acceptor in catalysis. 3 residues coordinate a divalent metal cation: Glu-213, Asp-235, and His-329.

This sequence belongs to the peptidase M42 family. A divalent metal cation is required as a cofactor.

The protein is Putative aminopeptidase SgcX (sgcX) of Salmonella typhimurium (strain LT2 / SGSC1412 / ATCC 700720).